A 346-amino-acid chain; its full sequence is Transcription factor 19 (346 aa).

One can recognise an FHA domain in the interval 31 to 88 (YRLGCRADLCDVALRPQQEPGFISEVHAELHAERRGDDWRVSLEDHSSQGTLVNNVRL). Ser78 carries the phosphoserine modification. Disordered regions lie at residues 136–168 (PRSRGEEGETRAGFRPMLPSQGAPQRPLSTLSP) and 190–289 (LTFS…AAGG). Residues 138–147 (SRGEEGETRA) are compositionally biased toward basic and acidic residues. The segment covering 190 to 208 (LTFSRSGSGPQNPPVSTTP) has biased composition (polar residues). The segment covering 250-260 (EPRKKLLRVEK) has biased composition (basic and acidic residues). A PHD-type zinc finger spans residues 294–343 (AAPCCCLPQEETVAWVQCDGCDTWFHVACVGCSIQAAKEADFRCPGCRVG). 8 residues coordinate Zn(2+): Cys297, Cys299, Cys311, Cys314, His319, Cys322, Cys337, and Cys340.

It localises to the nucleus. Potential transcription factor that may play a role in the regulation of genes involved in cell cycle G1/S transition. May bind to regulatory elements of genes, including the promoter of the transcription factor FOXO1. The protein is Transcription factor 19 (TCF19) of Sus scrofa (Pig).